Reading from the N-terminus, the 420-residue chain is Sulfate adenylyltransferase (420 aa).

It belongs to the sulfate adenylyltransferase family.

The enzyme catalyses sulfate + ATP + H(+) = adenosine 5'-phosphosulfate + diphosphate. It participates in sulfur metabolism; hydrogen sulfide biosynthesis; sulfite from sulfate: step 1/3. The chain is Sulfate adenylyltransferase from Desulforudis audaxviator (strain MP104C).